A 498-amino-acid polypeptide reads, in one-letter code: Protein MGF 505-5R (498 aa).

It belongs to the asfivirus MGF 505 family.

Plays a role in virus cell tropism, and may be required for efficient virus replication in macrophages. The chain is Protein MGF 505-5R from Ornithodoros (relapsing fever ticks).